The chain runs to 1531 residues: La-related protein Larp4B (1531 aa).

Residues 112–147 (HTHVAHQQQQQQQQQTIQQHLHQQQQQQSPHPAQHL) show a composition bias toward low complexity. Disordered regions lie at residues 112–148 (HTHVAHQQQQQQQQQTIQQHLHQQQQQQSPHPAQHLT) and 239–263 (QLPANGSADPQQGSHNAAGGEEPNI). Positions 262 to 351 (NIPLDKLKQM…RPNRKRCIII (90 aa)) constitute an HTH La-type RNA-binding domain. Residues 348 to 423 (CIIILREISN…KPIMARIKPK (76 aa)) form the RRM domain. 6 disordered regions span residues 533–605 (PLPP…QGGN), 710–736 (AHSHHLQAQQQLQGQTQQQHYQLASSS), 748–768 (TAPAPQQPGQHQHHLVVQQTQ), 791–1135 (QEAG…SNQQ), 1160–1211 (DVVR…TPAL), and 1251–1285 (ASSKEEAAGAQQQQQQQLDKSNKTEDEMHPKQPSQ). Residues 565–578 (YNNNHRGNPNNVGG) are compositionally biased toward low complexity. 2 stretches are compositionally biased toward low complexity: residues 754 to 768 (QPGQHQHHLVVQQTQ) and 810 to 826 (SSNMSASSSSSLATSMS). A compositionally biased stretch (polar residues) spans 860-884 (SSPSNPHPQQHLMSSSTGSNVQSAG). Over residues 945-959 (ALSSQQQQHHLTTGT) the composition is skewed to low complexity. Over residues 966–975 (HHYHHHHHHN) the composition is skewed to basic residues. Over residues 983-1004 (NSGGLGVSSGGSGGGGSGGGSG) the composition is skewed to gly residues. The segment covering 1031 to 1045 (HQQQQQQQQQQQQQQ) has biased composition (low complexity). The segment covering 1068–1086 (TSATAPHTPQATGGASLHN) has biased composition (polar residues). Residues 1087-1115 (STTSSSSSTGLGQKQTLHQQQQQAPQQHQ) are compositionally biased toward low complexity. Serine 1123 is subject to Phosphoserine. Residues 1164-1173 (TGGGGGGGGK) show a composition bias toward gly residues. The span at 1183-1200 (PQGQNQPHMAPNYQQHQP) shows a compositional bias: polar residues. Basic and acidic residues predominate over residues 1270–1280 (KSNKTEDEMHP). Phosphoserine is present on residues serine 1370 and serine 1413. Disordered regions lie at residues 1393 to 1418 (KAAASSDSKETGSGGSTGTLSPTGSH) and 1450 to 1531 (GGAS…ANNS). 2 stretches are compositionally biased toward polar residues: residues 1467–1477 (ATNTTQGSSAV) and 1502–1515 (QHYGSATEHNTNAN).

Functionally, probable RNA binding protein. Negatively regulates myc at the protein level, via an unknown mechanism, and may therefore have a role in growth. Has no effect on myc mRNA levels. The sequence is that of La-related protein Larp4B from Drosophila melanogaster (Fruit fly).